A 120-amino-acid polypeptide reads, in one-letter code: NAD(P)H-quinone oxidoreductase subunit 3 (120 aa).

Helical transmembrane passes span 6–26, 64–84, and 89–109; these read GYDA…LALV, MFAL…PWAV, and LGLL…VALA.

The protein belongs to the complex I subunit 3 family. As to quaternary structure, NDH-1 can be composed of about 15 different subunits; different subcomplexes with different compositions have been identified which probably have different functions.

It is found in the cellular thylakoid membrane. The catalysed reaction is a plastoquinone + NADH + (n+1) H(+)(in) = a plastoquinol + NAD(+) + n H(+)(out). It carries out the reaction a plastoquinone + NADPH + (n+1) H(+)(in) = a plastoquinol + NADP(+) + n H(+)(out). NDH-1 shuttles electrons from an unknown electron donor, via FMN and iron-sulfur (Fe-S) centers, to quinones in the respiratory and/or the photosynthetic chain. The immediate electron acceptor for the enzyme in this species is believed to be plastoquinone. Couples the redox reaction to proton translocation, and thus conserves the redox energy in a proton gradient. Cyanobacterial NDH-1 also plays a role in inorganic carbon-concentration. The polypeptide is NAD(P)H-quinone oxidoreductase subunit 3 (Prochlorococcus marinus (strain SARG / CCMP1375 / SS120)).